Here is an 84-residue protein sequence, read N- to C-terminus: Dolichol phosphate-mannose biosynthesis regulatory protein (84 aa).

The next 2 helical transmembrane spans lie at 11-31 and 49-69; these read FGLV…VILL and YAVL…GLFI.

It belongs to the DPM2 family. Component of the dolichol-phosphate mannose (DPM) synthase complex composed of DPM1, DPM2 and DPM3; in the complex interacts directly with DPM3. Component of the glycosylphosphatidylinositol-N-acetylglucosaminyltransferase (GPI-GnT) complex composed at least by PIGA, PIGC, PIGH, PIGP, PIGQ, PIGY and DPM2. Interacts with PIGA, PIGC and PIGQ.

Its subcellular location is the endoplasmic reticulum membrane. The protein operates within protein modification; protein glycosylation. Functionally, regulates the biosynthesis of dolichol phosphate-mannose. Regulatory subunit of the dolichol-phosphate mannose (DPM) synthase complex; essential for the ER localization and stable expression of DPM1. Part of the glycosylphosphatidylinositol-N-acetylglucosaminyltransferase (GPI-GnT) complex that catalyzes the transfer of N-acetylglucosamine from UDP-N-acetylglucosamine to phosphatidylinositol and participates in the first step of GPI biosynthesis. May act by regulating the GPI-GNT complex. The polypeptide is Dolichol phosphate-mannose biosynthesis regulatory protein (Mus musculus (Mouse)).